Reading from the N-terminus, the 883-residue chain is Phosphoenolpyruvate carboxylase (883 aa).

Active-site residues include His-138 and Lys-546.

This sequence belongs to the PEPCase type 1 family. Requires Mg(2+) as cofactor.

The catalysed reaction is oxaloacetate + phosphate = phosphoenolpyruvate + hydrogencarbonate. Its function is as follows. Forms oxaloacetate, a four-carbon dicarboxylic acid source for the tricarboxylic acid cycle. This Salmonella paratyphi A (strain ATCC 9150 / SARB42) protein is Phosphoenolpyruvate carboxylase.